The following is a 675-amino-acid chain: Acetyl-coenzyme A synthetase 2 (675 aa).

CoA-binding positions include 206–209 (RGGK) and Thr-325. ATP-binding positions include 401-403 (GEP), 425-430 (DTMWQT), Asp-516, and Arg-531. Residue Ser-539 participates in CoA binding. Residue Arg-542 participates in ATP binding. Arg-604 serves as a coordination point for CoA.

This sequence belongs to the ATP-dependent AMP-binding enzyme family.

It carries out the reaction acetate + ATP + CoA = acetyl-CoA + AMP + diphosphate. In Zygosaccharomyces bailii, this protein is Acetyl-coenzyme A synthetase 2 (ACS2).